The primary structure comprises 153 residues: uncharacterized protein (153 aa).

Residues 72 to 98 (LPISKTNDAERSQQTTKAPVMERTESS) form a disordered region.

Its subcellular location is the cytoplasm. The protein resides in the nucleus. This is an uncharacterized protein from Schizosaccharomyces pombe (strain 972 / ATCC 24843) (Fission yeast).